A 443-amino-acid polypeptide reads, in one-letter code: Serine/threonine-protein kinase SSN3 (443 aa).

Positions 1–24 (MERKRGREMNPPSADPPSATPVAR) are disordered. Residues 54–384 (YKIVGFISSG…AEKALEHRYF (331 aa)) enclose the Protein kinase domain. ATP-binding positions include 60-68 (ISSGTYGRV) and K84. D185 functions as the Proton acceptor in the catalytic mechanism. The interval 405–443 (RRVSQEDNDIRTSSLPGTKRSGLPDDSLMGRPAKRLKEG) is disordered.

It belongs to the protein kinase superfamily. CMGC Ser/Thr protein kinase family. CDC2/CDKX subfamily. In terms of assembly, component of the srb8-11 complex, a regulatory module of the Mediator complex. It depends on Mg(2+) as a cofactor.

Its subcellular location is the nucleus. The enzyme catalyses L-seryl-[protein] + ATP = O-phospho-L-seryl-[protein] + ADP + H(+). It carries out the reaction L-threonyl-[protein] + ATP = O-phospho-L-threonyl-[protein] + ADP + H(+). It catalyses the reaction [DNA-directed RNA polymerase] + ATP = phospho-[DNA-directed RNA polymerase] + ADP + H(+). In terms of biological role, component of the srb8-11 complex. The srb8-11 complex is a regulatory module of the Mediator complex which is itself dependent transcription. The srb8-11 complex may be involved in the transcriptional repression of a subset of genes regulated by Mediator. It may inhibit the association of the Mediator complex with RNA polymerase II to form the holoenzyme complex. The srb8-11 complex phosphorylates the C-terminal domain (CTD) of the largest subunit of RNA polymerase II. This is Serine/threonine-protein kinase SSN3 (SSN3) from Phaeosphaeria nodorum (strain SN15 / ATCC MYA-4574 / FGSC 10173) (Glume blotch fungus).